Reading from the N-terminus, the 209-residue chain is Probable nicotinate-nucleotide adenylyltransferase (209 aa).

It belongs to the NadD family.

It carries out the reaction nicotinate beta-D-ribonucleotide + ATP + H(+) = deamido-NAD(+) + diphosphate. It participates in cofactor biosynthesis; NAD(+) biosynthesis; deamido-NAD(+) from nicotinate D-ribonucleotide: step 1/1. Functionally, catalyzes the reversible adenylation of nicotinate mononucleotide (NaMN) to nicotinic acid adenine dinucleotide (NaAD). This chain is Probable nicotinate-nucleotide adenylyltransferase, found in Idiomarina loihiensis (strain ATCC BAA-735 / DSM 15497 / L2-TR).